The sequence spans 388 residues: bZIP transcription factor ABI5 homolog (388 aa).

Residues 1–36 form a disordered region; the sequence is MASEMSKNVKVTDDQEVTSQERDQSGGTKVGGEEEI. A Phosphoserine modification is found at serine 44. The region spanning 302 to 365 is the bZIP domain; it reads VERRQRRMIK…KQMLVEKMME (64 aa). The tract at residues 304-323 is basic motif; the sequence is RRQRRMIKNRESAARSRARK. The segment at 330-344 is leucine-zipper; sequence LEAELNYLKQENARL. Residues 368–388 form a disordered region; the sequence is KEKMNANRGGSQLRRSGSCMW.

It belongs to the bZIP family. ABI5 subfamily. Forms homodimers. Interacts with VP1. Interacts with GF14D. Interacts with PP2C51. Interacts with SAPK2. In terms of processing, phosphorylated at Ser-44 by SAPK6. In terms of tissue distribution, expressed in roots, leaves and panicles. Expressed in seeds.

Its subcellular location is the nucleus. In terms of biological role, transcription factor that possesses transactivation activity in yeast. Involved in abscisic acid (ABA) signaling pathway. Binds to the G-box motif 5'-CACGTG-3' of TRAB1 gene promoter. Involved in the regulation of pollen maturation. May act as negative regulator of salt stress response. Together with PYL5, PP2C30 and SAPK2, is part of an ABA signaling unit that modulates seed germination and early seedling growth. This Oryza sativa subsp. japonica (Rice) protein is bZIP transcription factor ABI5 homolog.